A 222-amino-acid polypeptide reads, in one-letter code: Putative O-methyltransferase MAP_2558 (222 aa).

S-adenosyl-L-methionine contacts are provided by residues V49, E71, 73 to 74 (GT), S79, D97, and I98. D145 is a substrate binding site. S-adenosyl-L-methionine is bound at residue D147.

The protein belongs to the class I-like SAM-binding methyltransferase superfamily. Cation-dependent O-methyltransferase family.

This is Putative O-methyltransferase MAP_2558 from Mycolicibacterium paratuberculosis (strain ATCC BAA-968 / K-10) (Mycobacterium paratuberculosis).